The following is a 109-amino-acid chain: Probable glutaredoxin slr1562 (109 aa).

One can recognise a Glutaredoxin domain in the interval 11–109 (LSGRQADGIK…PLLATPPNPA (99 aa)). C31 and C34 are joined by a disulfide.

This sequence belongs to the glutaredoxin family.

In terms of biological role, has a glutathione-disulfide oxidoreductase activity in the presence of NADPH and glutathione reductase. Reduces low molecular weight disulfides and proteins. In Synechocystis sp. (strain ATCC 27184 / PCC 6803 / Kazusa), this protein is Probable glutaredoxin slr1562.